The chain runs to 276 residues: Aldo-keto reductase Mjls_1919 (276 aa).

The active-site Proton donor is the Tyr50. 8 residues coordinate NADPH: Leu190, Ile228, Lys230, Ser231, Val232, Arg236, Ser239, and Asn240.

The protein belongs to the aldo/keto reductase family.

The chain is Aldo-keto reductase Mjls_1919 from Mycobacterium sp. (strain JLS).